Reading from the N-terminus, the 132-residue chain is Seminal vesicle protein SVP-2 (132 aa).

The N-terminal stretch at 1–14 (HLALLLILENQASG) is a signal peptide. The segment covering 33–81 (HKEEVEESESSRGQDFDKRRFWEKDDPTGEHVSVRHEHLEKSHIRFKED) has biased composition (basic and acidic residues). Disordered stretches follow at residues 33-104 (HKEE…LKRH) and 113-132 (VEDQ…MQRV). The propeptide occupies 104-132 (HDAMEELVSVEDQALANGADPGKSNMQRV).

This sequence to the SVP-1/-3/-4 precursor, particularly in regions where protein processing must occur.

The protein localises to the secreted. In Cavia porcellus (Guinea pig), this protein is Seminal vesicle protein SVP-2.